Here is a 668-residue protein sequence, read N- to C-terminus: Metal reductase (668 aa).

FMN contacts are provided by residues 23–25 (PMH), Gly-57, Gln-98, Arg-216, Arg-290, and 312–313 (AR). [4Fe-4S] cluster-binding residues include Cys-336 and Cys-339. FAD is bound at residue Gln-341. 2 residues coordinate [4Fe-4S] cluster: Cys-343 and Cys-355. Ala-386, Glu-405, Gln-413, Arg-423, and Ala-450 together coordinate FAD.

It in the N-terminal section; belongs to the NADH:flavin oxidoreductase/NADH oxidase family. In terms of assembly, homotetramer. The cofactor is FMN. Requires FAD as cofactor. [4Fe-4S] cluster is required as a cofactor.

Its subcellular location is the cytoplasm. Functionally, metal reductase able to reduce Fe(III)-chelates to Fe(II)-chelates, as well as soluble Cr(VI) and U(VI), using NADH as electron donor. Cannot use NADPH as an electron donor. Is unable to reduce riboflavin and FMN with NADH as electron donor. May have an in vivo role in metal reduction in D.reducens, which is an organism capable of reducing contaminant heavy metals and radionuclides. The protein is Metal reductase of Desulforamulus reducens (strain ATCC BAA-1160 / DSM 100696 / MI-1) (Desulfotomaculum reducens).